The chain runs to 382 residues: Cytochrome c biogenesis CcmF N-terminal-like mitochondrial protein 1 (382 aa).

The next 4 membrane-spanning stretches (helical) occupy residues Met-1 to Phe-21, Ala-30 to Cys-50, His-79 to Tyr-99, and Ser-117 to Tyr-137.

The protein belongs to the CcmF/CycK/Ccl1/NrfE/CcsA family. Interacts with CCMFN2 and CCMH.

It localises to the mitochondrion inner membrane. Its function is as follows. Forms a complex with CCMFC, CCMFN2 and CCMH that performs the assembly of heme with c-type apocytochromes in mitochondria. In Arabidopsis thaliana (Mouse-ear cress), this protein is Cytochrome c biogenesis CcmF N-terminal-like mitochondrial protein 1.